The primary structure comprises 801 residues: Mitochondrial intermediate peptidase (801 aa).

The transit peptide at 1–41 directs the protein to the mitochondrion; sequence MKDQLLVPLRRRPWTCQKCLQRLQLPRHQTRRSFETAASPF. Position 564 (histidine 564) interacts with Zn(2+). Residue glutamate 565 is part of the active site. Residues histidine 568 and histidine 571 each contribute to the Zn(2+) site.

Belongs to the peptidase M3 family. Zn(2+) is required as a cofactor.

It is found in the mitochondrion matrix. The catalysed reaction is Release of an N-terminal octapeptide as second stage of processing of some proteins imported into the mitochondrion.. Cleaves proteins, imported into the mitochondrion, to their mature size. While most mitochondrial precursor proteins are processed to the mature form in one step by mitochondrial processing peptidase (MPP), the sequential cleavage by MIP of an octapeptide after initial processing by MPP is a required step for a subgroup of nuclear-encoded precursor proteins destined for the matrix or the inner membrane. This is Mitochondrial intermediate peptidase (oct1) from Aspergillus fumigatus (strain CBS 144.89 / FGSC A1163 / CEA10) (Neosartorya fumigata).